Reading from the N-terminus, the 395-residue chain is ATP phosphoribosyltransferase regulatory subunit (395 aa).

The protein belongs to the class-II aminoacyl-tRNA synthetase family. HisZ subfamily. As to quaternary structure, heteromultimer composed of HisG and HisZ subunits.

The protein resides in the cytoplasm. Its pathway is amino-acid biosynthesis; L-histidine biosynthesis; L-histidine from 5-phospho-alpha-D-ribose 1-diphosphate: step 1/9. In terms of biological role, required for the first step of histidine biosynthesis. May allow the feedback regulation of ATP phosphoribosyltransferase activity by histidine. The protein is ATP phosphoribosyltransferase regulatory subunit of Pseudomonas fluorescens (strain ATCC BAA-477 / NRRL B-23932 / Pf-5).